The chain runs to 80 residues: MSLLSALTSISKPMNTSSKSSVSSKNVSGLSMGSNSIACGSCGGSYGYPGAGLLAIVDLNVNIDIDINLSATRSYSCGCN.

Residues 1-29 (MSLLSALTSISKPMNTSSKSSVSSKNVSG) form a disordered region. The span at 9–29 (SISKPMNTSSKSSVSSKNVSG) shows a compositional bias: low complexity.

The protein belongs to the hssA/B family.

This chain is HssA/B-like protein 2 (hssl2), found in Dictyostelium discoideum (Social amoeba).